We begin with the raw amino-acid sequence, 636 residues long: Probable potassium transport system protein Kup (636 aa).

The next 12 membrane-spanning stretches (helical) occupy residues 22–42 (VGLLVAAVGVVYGDIGTSPLY), 64–84 (ILSLILWSLLWVVSFKYVMFI), 115–135 (LMVICGLIGASLFYGDSMITP), 150–170 (FDGIDHWVVPISLVVLVALFL), 182–202 (LFGPIMVTWFVALGALGVHGI), 220–240 (FFVVHPGIGVAILGAVVLALT), 261–281 (WFILVLPALVLNYFGQGALLL), 293–313 (LLAPGWALLPLVGLATMATVI), 351–371 (IYIGAVNWTLMVGVVLLVIGF), 383–403 (VAVTGTMLMTTILVSAVMLLL), 408–428 (PLLAVPILVGFLFVDGLFFAA), and 433–453 (IVQGGAFPVLAGGVLYLLMST).

It belongs to the HAK/KUP transporter (TC 2.A.72) family.

The protein resides in the cell inner membrane. It catalyses the reaction K(+)(in) + H(+)(in) = K(+)(out) + H(+)(out). Functionally, transport of potassium into the cell. Likely operates as a K(+):H(+) symporter. The polypeptide is Probable potassium transport system protein Kup (Pseudomonas putida (strain ATCC 700007 / DSM 6899 / JCM 31910 / BCRC 17059 / LMG 24140 / F1)).